We begin with the raw amino-acid sequence, 183 residues long: Ribosome maturation factor RimP (183 aa).

The protein belongs to the RimP family.

The protein localises to the cytoplasm. Its function is as follows. Required for maturation of 30S ribosomal subunits. In Mycobacterium bovis (strain ATCC BAA-935 / AF2122/97), this protein is Ribosome maturation factor RimP.